We begin with the raw amino-acid sequence, 433 residues long: Enolase (433 aa).

Gln-167 serves as a coordination point for (2R)-2-phosphoglycerate. The Proton donor role is filled by Glu-209. Asp-246, Glu-291, and Asp-318 together coordinate Mg(2+). Lys-343, Arg-372, Ser-373, and Lys-394 together coordinate (2R)-2-phosphoglycerate. Lys-343 functions as the Proton acceptor in the catalytic mechanism.

The protein belongs to the enolase family. As to quaternary structure, component of the RNA degradosome, a multiprotein complex involved in RNA processing and mRNA degradation. Mg(2+) serves as cofactor.

It localises to the cytoplasm. It is found in the secreted. The protein resides in the cell surface. The catalysed reaction is (2R)-2-phosphoglycerate = phosphoenolpyruvate + H2O. It participates in carbohydrate degradation; glycolysis; pyruvate from D-glyceraldehyde 3-phosphate: step 4/5. Catalyzes the reversible conversion of 2-phosphoglycerate (2-PG) into phosphoenolpyruvate (PEP). It is essential for the degradation of carbohydrates via glycolysis. The protein is Enolase of Shewanella piezotolerans (strain WP3 / JCM 13877).